A 249-amino-acid chain; its full sequence is Cell division protein FtsQ (249 aa).

Residues 1 to 6 are Cytoplasmic-facing; it reads MKFILF. A helical membrane pass occupies residues 7 to 23; sequence ALLVSAGSWYGWKQLHS. At 24-249 the chain is on the periplasmic side; that stretch reads QDAVSKPIRY…YKNVMKERRI (226 aa). The 70-residue stretch at 29 to 98 folds into the POTRA domain; that stretch reads KPIRYVKIEG…DAVHIKITEQ (70 aa).

This sequence belongs to the FtsQ/DivIB family. FtsQ subfamily. As to quaternary structure, part of a complex composed of FtsB, FtsL and FtsQ.

The protein localises to the cell inner membrane. Its function is as follows. Essential cell division protein. May link together the upstream cell division proteins, which are predominantly cytoplasmic, with the downstream cell division proteins, which are predominantly periplasmic. May control correct divisome assembly. The protein is Cell division protein FtsQ of Methylomonas methanica (strain DSM 25384 / MC09).